The sequence spans 337 residues: tRNA N6-adenosine threonylcarbamoyltransferase (337 aa).

Residues histidine 111 and histidine 115 each contribute to the Fe cation site. Residues 134-138 (LVSGG), aspartate 167, glycine 180, and asparagine 272 contribute to the substrate site. Fe cation is bound at residue aspartate 300.

It belongs to the KAE1 / TsaD family. Fe(2+) serves as cofactor.

The protein localises to the cytoplasm. It carries out the reaction L-threonylcarbamoyladenylate + adenosine(37) in tRNA = N(6)-L-threonylcarbamoyladenosine(37) in tRNA + AMP + H(+). Its function is as follows. Required for the formation of a threonylcarbamoyl group on adenosine at position 37 (t(6)A37) in tRNAs that read codons beginning with adenine. Is involved in the transfer of the threonylcarbamoyl moiety of threonylcarbamoyl-AMP (TC-AMP) to the N6 group of A37, together with TsaE and TsaB. TsaD likely plays a direct catalytic role in this reaction. In Shewanella loihica (strain ATCC BAA-1088 / PV-4), this protein is tRNA N6-adenosine threonylcarbamoyltransferase.